Reading from the N-terminus, the 220-residue chain is Demethylmenaquinone methyltransferase (220 aa).

S-adenosyl-L-methionine is bound by residues T47, D67, and 93 to 94; that span reads DA.

It belongs to the class I-like SAM-binding methyltransferase superfamily. MenG/UbiE family.

The catalysed reaction is a 2-demethylmenaquinol + S-adenosyl-L-methionine = a menaquinol + S-adenosyl-L-homocysteine + H(+). It participates in quinol/quinone metabolism; menaquinone biosynthesis; menaquinol from 1,4-dihydroxy-2-naphthoate: step 2/2. Methyltransferase required for the conversion of demethylmenaquinol (DMKH2) to menaquinol (MKH2). This is Demethylmenaquinone methyltransferase from Thermus thermophilus (strain ATCC BAA-163 / DSM 7039 / HB27).